We begin with the raw amino-acid sequence, 1281 residues long: Angiotensin-converting enzyme (1281 aa).

The N-terminal stretch at 1–17 is a signal peptide; that stretch reads MPAALGLLLPWLSLVGA. The Extracellular portion of the chain corresponds to 18–1241; the sequence is LQPGLEPPQS…MSVGTKQATA (1224 aa). Peptidase M2 domains lie at 28–610 and 629–1208; these read DPTE…LGWP and IVDE…LGWP. 5 N-linked (GlcNAc...) asparagine glycosylation sites follow: Asn-42, Asn-62, Asn-80, Asn-99, and Asn-148. A disulfide bridge links Cys-145 with Cys-151. Tyr-217 provides a ligand contact to chloride. N-linked (GlcNAc...) asparagine glycosylation is present at Asn-304. The cysteines at positions 345 and 363 are disulfide-linked. Position 376 (His-376) interacts with Zn(2+). The Proton acceptor 1 role is filled by Glu-377. His-380 and Glu-404 together coordinate Zn(2+). A glycan (N-linked (GlcNAc...) asparagine) is linked at Asn-495. The active-site Proton donor 1 is the His-506. Arg-515 contacts chloride. Cys-531 and Cys-543 are disulfide-bonded. N-linked (GlcNAc...) asparagine glycans are attached at residues Asn-535, Asn-573, Asn-601, Asn-643, Asn-663, and Asn-746. An intrachain disulfide couples Cys-743 to Cys-749. 2 residues coordinate chloride: Arg-777 and Tyr-815. Cysteines 943 and 961 form a disulfide. His-974 is a binding site for Zn(2+). Glu-975 serves as the catalytic Proton acceptor 2. Zn(2+) is bound by residues His-978 and Glu-1002. Residues Trp-1076 and Arg-1080 each contribute to the chloride site. His-1104 (proton donor 2) is an active-site residue. Arg-1113 contributes to the chloride binding site. Cys-1129 and Cys-1141 are oxidised to a cystine. N-linked (GlcNAc...) asparagine glycosylation occurs at Asn-1177. The juxtamembrane stalk stretch occupies residues 1201-1240; that stretch reads NGEVLGWPEYSWTPYAVTEFHAATDTADFLGMSVGTKQAT. A helical transmembrane segment spans residues 1242-1262; the sequence is GAWVLLALALVFLITSIFLGV. Residues 1263–1281 are Cytoplasmic-facing; that stretch reads KLFSSRRKAFKSSSEMELK.

This sequence belongs to the peptidase M2 family. Zn(2+) is required as a cofactor. It depends on chloride as a cofactor.

It localises to the cell membrane. It is found in the cytoplasm. The enzyme catalyses Release of a C-terminal dipeptide, oligopeptide-|-Xaa-Yaa, when Xaa is not Pro, and Yaa is neither Asp nor Glu. Thus, conversion of angiotensin I to angiotensin II, with increase in vasoconstrictor activity, but no action on angiotensin II.. It catalyses the reaction angiotensin I + H2O = L-histidyl-L-leucine + angiotensin II. The catalysed reaction is bradykinin + H2O = L-Phe-L-Arg + bradykinin(1-7). It carries out the reaction substance P + H2O = substance P(1-9) + L-Leu-L-Met-NH2. The enzyme catalyses substance P + H2O = substance P(1-8) + Gly-L-Leu-L-Met-NH2. It catalyses the reaction substance P + H2O = L-Phe-L-Phe-Gly-L-Leu-L-Met-NH2 + substance P(1-6). The catalysed reaction is neurotensin + H2O = neurotensin(1-11) + L-isoleucyl-L-leucine. It carries out the reaction goralatide + H2O = N-acetyl-L-seryl-L-aspartate + L-lysyl-L-proline. The enzyme catalyses Met-enkephalin + H2O = L-phenylalanyl-L-methionine + L-tyrosylglycylglycine. It catalyses the reaction Leu-enkephalin + H2O = L-tyrosylglycylglycine + L-phenylalanyl-L-leucine. The catalysed reaction is Met-enkephalin-Arg-Phe + H2O = L-arginyl-L-phenylalanine + Met-enkephalin. In terms of biological role, dipeptidyl carboxypeptidase that removes dipeptides from the C-terminus of a variety of circulating hormones, such as angiotensin I, bradykinin or enkephalins, thereby playing a key role in the regulation of blood pressure, electrolyte homeostasis or synaptic plasticity. Composed of two similar catalytic domains, each possessing a functional active site, with different selectivity for substrates. Plays a major role in the angiotensin-renin system that regulates blood pressure and sodium retention by the kidney by converting angiotensin I to angiotensin II, resulting in an increase of the vasoconstrictor activity of angiotensin. Also able to inactivate bradykinin, a potent vasodilator, and therefore enhance the blood pressure response. Acts as a regulator of synaptic transmission by mediating cleavage of neuropeptide hormones, such as substance P, neurotensin or enkephalins. Catalyzes degradation of different enkephalin neuropeptides (Met-enkephalin, Leu-enkephalin, Met-enkephalin-Arg-Phe and possibly Met-enkephalin-Arg-Gly-Leu). Also acts as a regulator of hematopoietic stem cell differentiation by mediating degradation of hemoregulatory peptide N-acetyl-SDKP (AcSDKP). The protein is Angiotensin-converting enzyme of Gallus gallus (Chicken).